A 360-amino-acid chain; its full sequence is GTP 3',8-cyclase (360 aa).

In terms of domain architecture, Radical SAM core spans arginine 33 to aspartate 251. Arginine 42 is a GTP binding site. [4Fe-4S] cluster-binding residues include cysteine 49 and cysteine 53. Tyrosine 55 lines the S-adenosyl-L-methionine pocket. [4Fe-4S] cluster is bound at residue cysteine 56. Arginine 93 provides a ligand contact to GTP. S-adenosyl-L-methionine is bound at residue glycine 97. Threonine 124 contacts GTP. An S-adenosyl-L-methionine-binding site is contributed by serine 148. Lysine 185 serves as a coordination point for GTP. Methionine 219 contributes to the S-adenosyl-L-methionine binding site. [4Fe-4S] cluster is bound by residues cysteine 287 and cysteine 290. GTP is bound at residue arginine 292–arginine 294. [4Fe-4S] cluster is bound at residue cysteine 304.

Belongs to the radical SAM superfamily. MoaA family. In terms of assembly, monomer and homodimer. Requires [4Fe-4S] cluster as cofactor.

The catalysed reaction is GTP + AH2 + S-adenosyl-L-methionine = (8S)-3',8-cyclo-7,8-dihydroguanosine 5'-triphosphate + 5'-deoxyadenosine + L-methionine + A + H(+). It functions in the pathway cofactor biosynthesis; molybdopterin biosynthesis. Catalyzes the cyclization of GTP to (8S)-3',8-cyclo-7,8-dihydroguanosine 5'-triphosphate. The sequence is that of GTP 3',8-cyclase from Mycobacterium marinum (strain ATCC BAA-535 / M).